A 1294-amino-acid chain; its full sequence is von Willebrand factor A domain-containing protein 3B (1294 aa).

Residues 508-684 (CIYILIDTSH…EDLTLLVKEM (177 aa)) enclose the VWFA domain. 4 disordered regions span residues 732 to 754 (CAKP…KGPW), 778 to 803 (RSQM…SSRR), 1012 to 1036 (APGE…DPLK), and 1193 to 1247 (DTQD…PRTA). The segment covering 738–748 (DVDSTQTSSLN) has biased composition (polar residues). The span at 778-787 (RSQMSSLRSS) shows a compositional bias: low complexity. Basic and acidic residues predominate over residues 1193-1202 (DTQDSREPRR). Positions 1203–1212 (EKPRRKKRPA) are enriched in basic residues. The segment covering 1213 to 1236 (KQPLQQAAPSDSDGSSHGISSHGS) has biased composition (low complexity).

The protein resides in the cytoplasm. This Homo sapiens (Human) protein is von Willebrand factor A domain-containing protein 3B (VWA3B).